Here is a 517-residue protein sequence, read N- to C-terminus: Sterol 14-alpha demethylase CYP51C (517 aa).

Residues 10–30 form a helical membrane-spanning segment; the sequence is TLPLSVSIPLTTSIIIILSIV. Residue Tyr115 participates in lanosterol binding. Gly300 contacts itraconazole. Cys458 provides a ligand contact to heme.

It belongs to the cytochrome P450 family. Heme serves as cofactor.

Its subcellular location is the endoplasmic reticulum membrane. Its pathway is steroid metabolism; ergosterol biosynthesis. In terms of biological role, together with cyp51A and cyp51B, encodes the sterol 14alpha-demethylase that plays a critical role in the third module of ergosterol biosynthesis pathway, being ergosterol the major sterol component in fungal membranes that participates in a variety of functions. Cyp51C does not seem to encode an active sterol 14-alpha-demethylase, but can impact indirectly on sterol 14alpha-demethylation, and is required for full virulence on host wheat ears, but not on Arabidopsis floral tissue or the fruits of apple and tomato. The third module or late pathway involves the ergosterol synthesis itself through consecutive reactions that mainly occur in the endoplasmic reticulum (ER) membrane. In filamentous fungi, during the initial step of this module, lanosterol (lanosta-8,24-dien-3beta-ol) can be metabolized to eburicol. Sterol 14alpha-demethylase catalyzes the three-step oxidative removal of the 14alpha-methyl group (C-32) of both these sterols in the form of formate, and converts eburicol and lanosterol to 14-demethyleburicol (4,4,24-trimethylergosta-8,14,24(28)-trienol) and 4,4-dimethyl-5alpha-cholesta-8,14,24-trien-3beta-ol, respectively, which are further metabolized by other enzymes in the pathway to ergosterol. This is Sterol 14-alpha demethylase CYP51C from Gibberella zeae (strain ATCC MYA-4620 / CBS 123657 / FGSC 9075 / NRRL 31084 / PH-1) (Wheat head blight fungus).